A 636-amino-acid polypeptide reads, in one-letter code: NADP-dependent malic enzyme, chloroplastic (636 aa).

A disordered region spans residues 1-28; the sequence is MLSTRTAAVAASASPASPWKLGGRSEGG. Residues 1-62 constitute a chloroplast transit peptide; it reads MLSTRTAAVA…LPPRRVDAVA (62 aa). The span at 7 to 18 shows a compositional bias: low complexity; it reads AAVAASASPASP. Catalysis depends on tyrosine 184, which acts as the Proton donor. Arginine 237 is an NAD(+) binding site. Residue lysine 255 is the Proton acceptor of the active site. A divalent metal cation contacts are provided by glutamate 327, aspartate 328, and aspartate 351. Position 351 (aspartate 351) interacts with NAD(+). 380-396 contacts NADP(+); the sequence is LFLGAGEAGTGIAELIA. Residue asparagine 492 participates in NAD(+) binding.

Belongs to the malic enzymes family. As to quaternary structure, homotetramer. The cofactor is Mg(2+). Mn(2+) is required as a cofactor.

The protein localises to the plastid. The protein resides in the chloroplast. The enzyme catalyses (S)-malate + NADP(+) = pyruvate + CO2 + NADPH. The catalysed reaction is oxaloacetate + H(+) = pyruvate + CO2. It functions in the pathway photosynthesis; C4 acid pathway. Functionally, the chloroplastic ME isoform decarboxylates malate shuttled from neighboring mesophyll cells. The CO(2) released is then refixed by ribulose-bisphosphate carboxylase. This pathway eliminates the photorespiratory loss of CO(2) that occurs in most plants. The sequence is that of NADP-dependent malic enzyme, chloroplastic (MOD1) from Zea mays (Maize).